Consider the following 120-residue polypeptide: Large ribosomal subunit protein uL18 (120 aa).

This sequence belongs to the universal ribosomal protein uL18 family. Part of the 50S ribosomal subunit; part of the 5S rRNA/L5/L18/L25 subcomplex. Contacts the 5S and 23S rRNAs.

In terms of biological role, this is one of the proteins that bind and probably mediate the attachment of the 5S RNA into the large ribosomal subunit, where it forms part of the central protuberance. In Bartonella bacilliformis (strain ATCC 35685 / KC583 / Herrer 020/F12,63), this protein is Large ribosomal subunit protein uL18.